The following is a 145-amino-acid chain: Flagellar assembly factor FliW (145 aa).

This sequence belongs to the FliW family. In terms of assembly, interacts with translational regulator CsrA and flagellin(s).

The protein resides in the cytoplasm. Its function is as follows. Acts as an anti-CsrA protein, binds CsrA and prevents it from repressing translation of its target genes, one of which is flagellin. Binds to flagellin and participates in the assembly of the flagellum. This Thermosipho africanus (strain TCF52B) protein is Flagellar assembly factor FliW.